The following is a 98-amino-acid chain: Putative protein adenylyltransferase MJ1217 (98 aa).

The GSX(10)DXD motif signature appears at 31–45; that stretch reads GSYAREEQKETSDID. Positions 43, 45, and 75 each coordinate Mg(2+).

This sequence belongs to the MntA antitoxin family. As to quaternary structure, probably forms a complex with cognate toxin MJ1216. Mg(2+) serves as cofactor.

It carries out the reaction L-tyrosyl-[protein] + ATP = O-(5'-adenylyl)-L-tyrosyl-[protein] + diphosphate. It catalyses the reaction O-(5'-adenylyl)-L-tyrosyl-[protein] + ATP = O-[5'-(adenylyl-(5'-&gt;3')-adenylyl)]-L-tyrosyl-[protein] + diphosphate. In terms of biological role, probable antitoxin component of a putative type VII toxin-antitoxin (TA) system. Neutralizes cognate toxic MJ1216 by di-AMPylation. This is Putative protein adenylyltransferase MJ1217 from Methanocaldococcus jannaschii (strain ATCC 43067 / DSM 2661 / JAL-1 / JCM 10045 / NBRC 100440) (Methanococcus jannaschii).